Reading from the N-terminus, the 48-residue chain is uncharacterized protein (48 aa).

A helical transmembrane segment spans residues 25 to 47 (TFASIGVTVGVQIVILLIWGLSW).

It is found in the membrane. This is an uncharacterized protein from Archaeoglobus fulgidus (strain ATCC 49558 / DSM 4304 / JCM 9628 / NBRC 100126 / VC-16).